A 215-amino-acid polypeptide reads, in one-letter code: Probable GTP-binding protein EngB (215 aa).

The EngB-type G domain maps to 30-204 (TGIEVAFAGR…RQKLDTWFSE (175 aa)). Residues 38–45 (GRSNAGKS), 65–69 (GRTQL), 83–86 (DLPG), 150–153 (TKAD), and 183–185 (FSS) each bind GTP. Positions 45 and 67 each coordinate Mg(2+).

Belongs to the TRAFAC class TrmE-Era-EngA-EngB-Septin-like GTPase superfamily. EngB GTPase family. The cofactor is Mg(2+).

In terms of biological role, necessary for normal cell division and for the maintenance of normal septation. The chain is Probable GTP-binding protein EngB from Escherichia coli O1:K1 / APEC.